A 159-amino-acid chain; its full sequence is Ribosomal RNA large subunit methyltransferase H (159 aa).

S-adenosyl-L-methionine-binding positions include Leu76, Gly108, and 127–132 (FGKLTM).

It belongs to the RNA methyltransferase RlmH family. In terms of assembly, homodimer.

The protein resides in the cytoplasm. The catalysed reaction is pseudouridine(1915) in 23S rRNA + S-adenosyl-L-methionine = N(3)-methylpseudouridine(1915) in 23S rRNA + S-adenosyl-L-homocysteine + H(+). Its function is as follows. Specifically methylates the pseudouridine at position 1915 (m3Psi1915) in 23S rRNA. This chain is Ribosomal RNA large subunit methyltransferase H, found in Lacticaseibacillus casei (strain BL23) (Lactobacillus casei).